The chain runs to 419 residues: Enolase (419 aa).

Gln-161 serves as a coordination point for (2R)-2-phosphoglycerate. The active-site Proton donor is the Glu-205. Positions 240, 283, and 309 each coordinate Mg(2+). Lys-334, Arg-363, Ser-364, and Lys-385 together coordinate (2R)-2-phosphoglycerate. The active-site Proton acceptor is Lys-334.

The protein belongs to the enolase family. It depends on Mg(2+) as a cofactor.

Its subcellular location is the cytoplasm. The protein localises to the secreted. It localises to the cell surface. The catalysed reaction is (2R)-2-phosphoglycerate = phosphoenolpyruvate + H2O. It functions in the pathway carbohydrate degradation; glycolysis; pyruvate from D-glyceraldehyde 3-phosphate: step 4/5. Functionally, catalyzes the reversible conversion of 2-phosphoglycerate (2-PG) into phosphoenolpyruvate (PEP). It is essential for the degradation of carbohydrates via glycolysis. This chain is Enolase, found in Saccharolobus islandicus (strain Y.G.57.14 / Yellowstone #1) (Sulfolobus islandicus).